The chain runs to 110 residues: UPF0122 protein SAR1212 (110 aa).

It belongs to the UPF0122 family.

Might take part in the signal recognition particle (SRP) pathway. This is inferred from the conservation of its genetic proximity to ftsY/ffh. May be a regulatory protein. This is UPF0122 protein SAR1212 from Staphylococcus aureus (strain MRSA252).